Here is a 76-residue protein sequence, read N- to C-terminus: Bowman-Birk type proteinase inhibitor DE-4 (76 aa).

Disulfide bonds link Cys15-Cys69, Cys16-Cys31, Cys19-Cys65, Cys21-Cys29, Cys39-Cys46, Cys43-Cys58, and Cys48-Cys56.

Belongs to the Bowman-Birk serine protease inhibitor family.

The sequence is that of Bowman-Birk type proteinase inhibitor DE-4 from Macrotyloma axillare (Perennial horse gram).